Reading from the N-terminus, the 102-residue chain is Small ribosomal subunit protein uS10 (102 aa).

Belongs to the universal ribosomal protein uS10 family. As to quaternary structure, part of the 30S ribosomal subunit.

Involved in the binding of tRNA to the ribosomes. The sequence is that of Small ribosomal subunit protein uS10 from Acidothermus cellulolyticus (strain ATCC 43068 / DSM 8971 / 11B).